The following is a 158-amino-acid chain: Protein Smg homolog (158 aa).

Belongs to the Smg family.

This Vibrio cholerae serotype O1 (strain ATCC 39315 / El Tor Inaba N16961) protein is Protein Smg homolog.